The following is a 255-amino-acid chain: NAD-dependent protein deacylase (255 aa).

The Deacetylase sirtuin-type domain occupies 1–253; that stretch reads MEFSDELLAS…PLLLQALRRS (253 aa). NAD(+) is bound at residue 22-42; the sequence is GAGVSAESGIPTFRDALTGFW. Positions 67 and 70 each coordinate substrate. NAD(+) is bound at residue 101-104; it reads QNVD. The active-site Proton acceptor is the His-119. Positions 127, 130, 155, and 158 each coordinate Zn(2+). Residues 195 to 197, 221 to 223, and Ala-239 contribute to the NAD(+) site; these read GTS and NPA.

This sequence belongs to the sirtuin family. Class III subfamily. Zn(2+) serves as cofactor.

It is found in the cytoplasm. It carries out the reaction N(6)-acetyl-L-lysyl-[protein] + NAD(+) + H2O = 2''-O-acetyl-ADP-D-ribose + nicotinamide + L-lysyl-[protein]. The enzyme catalyses N(6)-succinyl-L-lysyl-[protein] + NAD(+) + H2O = 2''-O-succinyl-ADP-D-ribose + nicotinamide + L-lysyl-[protein]. NAD-dependent lysine deacetylase and desuccinylase that specifically removes acetyl and succinyl groups on target proteins. Modulates the activities of several proteins which are inactive in their acylated form. This chain is NAD-dependent protein deacylase, found in Methylococcus capsulatus (strain ATCC 33009 / NCIMB 11132 / Bath).